The primary structure comprises 107 residues: Phosphoribosyl-ATP pyrophosphatase (107 aa).

It belongs to the PRA-PH family.

Its subcellular location is the cytoplasm. The enzyme catalyses 1-(5-phospho-beta-D-ribosyl)-ATP + H2O = 1-(5-phospho-beta-D-ribosyl)-5'-AMP + diphosphate + H(+). The protein operates within amino-acid biosynthesis; L-histidine biosynthesis; L-histidine from 5-phospho-alpha-D-ribose 1-diphosphate: step 2/9. The chain is Phosphoribosyl-ATP pyrophosphatase (hisE) from Caulobacter vibrioides (strain ATCC 19089 / CIP 103742 / CB 15) (Caulobacter crescentus).